We begin with the raw amino-acid sequence, 61 residues long: Conotoxin Bt5.1 (61 aa).

Residues 1–22 form the signal peptide; that stretch reads MRGLPVFVILLLLIASEPSVDA. Residues 23-48 constitute a propeptide that is removed on maturation; the sequence is RPKTKADVPLTSLNDNAKRTLQILRN.

It belongs to the conotoxin T superfamily. Contains 2 disulfide bonds that can be either 'C1-C3, C2-C4' or 'C1-C4, C2-C3', since these disulfide connectivities have been observed for conotoxins with cysteine framework V (for examples, see AC P0DQQ7 and AC P81755). In terms of tissue distribution, expressed by the venom duct.

The protein localises to the secreted. This is Conotoxin Bt5.1 from Conus betulinus (Beech cone).